The sequence spans 95 residues: Defensin-1 (95 aa).

A signal peptide spans 1-19; the sequence is MKIYFIVGLLFMAMVAIMA. The propeptide occupies 20-43; the sequence is APVEDEFEPLEHFENEERADRHRR. Intrachain disulfides connect cysteine 46–cysteine 74, cysteine 60–cysteine 79, and cysteine 64–cysteine 81. Phenylalanine 94 is subject to Phenylalanine amide.

The protein localises to the secreted. Its function is as follows. Found in royal jelly and in hemolymph, potent antibacterial protein against Gram-positive bacteria at low concentration. In Apis mellifera carnica (Carniolan honeybee), this protein is Defensin-1.